Here is a 283-residue protein sequence, read N- to C-terminus: tRNA pseudouridine synthase A (283 aa).

Residue D73 is the Nucleophile of the active site. The tract at residues 120–124 (FHARF) is RNA binding. Y131 provides a ligand contact to substrate. The interval 181–185 (QCQSR) is interaction with tRNA.

It belongs to the tRNA pseudouridine synthase TruA family. As to quaternary structure, homodimer.

The catalysed reaction is uridine(38/39/40) in tRNA = pseudouridine(38/39/40) in tRNA. Its function is as follows. Formation of pseudouridine at positions 38, 39 and 40 in the anticodon stem and loop of transfer RNAs. This Pectobacterium atrosepticum (strain SCRI 1043 / ATCC BAA-672) (Erwinia carotovora subsp. atroseptica) protein is tRNA pseudouridine synthase A.